The following is a 598-amino-acid chain: Elongation factor 4 (598 aa).

One can recognise a tr-type G domain in the interval 4 to 181 (SKIRNFSIIA…AVIEKIPAPK (178 aa)). GTP is bound by residues 16–21 (DHGKST) and 128–131 (NKID).

This sequence belongs to the TRAFAC class translation factor GTPase superfamily. Classic translation factor GTPase family. LepA subfamily.

The protein localises to the cell membrane. It catalyses the reaction GTP + H2O = GDP + phosphate + H(+). In terms of biological role, required for accurate and efficient protein synthesis under certain stress conditions. May act as a fidelity factor of the translation reaction, by catalyzing a one-codon backward translocation of tRNAs on improperly translocated ribosomes. Back-translocation proceeds from a post-translocation (POST) complex to a pre-translocation (PRE) complex, thus giving elongation factor G a second chance to translocate the tRNAs correctly. Binds to ribosomes in a GTP-dependent manner. The polypeptide is Elongation factor 4 (Mycoplasma mobile (strain ATCC 43663 / 163K / NCTC 11711) (Mesomycoplasma mobile)).